Consider the following 700-residue polypeptide: Elongation factor G (700 aa).

The region spanning 8-290 is the tr-type G domain; that stretch reads ERYRNIGISA…AVIDYLPAPT (283 aa). Residues 17-24, 88-92, and 142-145 contribute to the GTP site; these read AHIDAGKT, DTPGH, and NKMD.

Belongs to the TRAFAC class translation factor GTPase superfamily. Classic translation factor GTPase family. EF-G/EF-2 subfamily.

It is found in the cytoplasm. In terms of biological role, catalyzes the GTP-dependent ribosomal translocation step during translation elongation. During this step, the ribosome changes from the pre-translocational (PRE) to the post-translocational (POST) state as the newly formed A-site-bound peptidyl-tRNA and P-site-bound deacylated tRNA move to the P and E sites, respectively. Catalyzes the coordinated movement of the two tRNA molecules, the mRNA and conformational changes in the ribosome. The chain is Elongation factor G (fusA) from Pasteurella multocida (strain Pm70).